A 651-amino-acid polypeptide reads, in one-letter code: Acetyl-coenzyme A synthetase (651 aa).

Residues 191-194, threonine 311, and asparagine 335 each bind CoA; that span reads RGGK. ATP is bound by residues 387–389, 411–416, aspartate 500, and arginine 515; these read GEP and DTWWQT. Serine 523 is a binding site for CoA. Arginine 526 serves as a coordination point for ATP. Residues valine 537, histidine 539, and valine 542 each coordinate Mg(2+). Residue arginine 584 participates in CoA binding. The residue at position 609 (lysine 609) is an N6-acetyllysine.

It belongs to the ATP-dependent AMP-binding enzyme family. It depends on Mg(2+) as a cofactor. Acetylated. Deacetylation by the SIR2-homolog deacetylase activates the enzyme.

It catalyses the reaction acetate + ATP + CoA = acetyl-CoA + AMP + diphosphate. Functionally, catalyzes the conversion of acetate into acetyl-CoA (AcCoA), an essential intermediate at the junction of anabolic and catabolic pathways. AcsA undergoes a two-step reaction. In the first half reaction, AcsA combines acetate with ATP to form acetyl-adenylate (AcAMP) intermediate. In the second half reaction, it can then transfer the acetyl group from AcAMP to the sulfhydryl group of CoA, forming the product AcCoA. In Pseudomonas savastanoi pv. phaseolicola (strain 1448A / Race 6) (Pseudomonas syringae pv. phaseolicola (strain 1448A / Race 6)), this protein is Acetyl-coenzyme A synthetase.